The primary structure comprises 180 residues: ATP synthase subunit delta (180 aa).

This sequence belongs to the ATPase delta chain family. F-type ATPases have 2 components, F(1) - the catalytic core - and F(0) - the membrane proton channel. F(1) has five subunits: alpha(3), beta(3), gamma(1), delta(1), epsilon(1). F(0) has three main subunits: a(1), b(2) and c(10-14). The alpha and beta chains form an alternating ring which encloses part of the gamma chain. F(1) is attached to F(0) by a central stalk formed by the gamma and epsilon chains, while a peripheral stalk is formed by the delta and b chains.

The protein localises to the cell membrane. In terms of biological role, f(1)F(0) ATP synthase produces ATP from ADP in the presence of a proton or sodium gradient. F-type ATPases consist of two structural domains, F(1) containing the extramembraneous catalytic core and F(0) containing the membrane proton channel, linked together by a central stalk and a peripheral stalk. During catalysis, ATP synthesis in the catalytic domain of F(1) is coupled via a rotary mechanism of the central stalk subunits to proton translocation. This protein is part of the stalk that links CF(0) to CF(1). It either transmits conformational changes from CF(0) to CF(1) or is implicated in proton conduction. In Mycoplasma mobile (strain ATCC 43663 / 163K / NCTC 11711) (Mesomycoplasma mobile), this protein is ATP synthase subunit delta.